The chain runs to 224 residues: 7-cyano-7-deazaguanine synthase (224 aa).

An ATP-binding site is contributed by 12–22; that stretch reads LSGGLDSSTVT. Zn(2+) is bound by residues cysteine 193, cysteine 201, cysteine 204, and cysteine 207.

Belongs to the QueC family. Zn(2+) serves as cofactor.

It carries out the reaction 7-carboxy-7-deazaguanine + NH4(+) + ATP = 7-cyano-7-deazaguanine + ADP + phosphate + H2O + H(+). It functions in the pathway purine metabolism; 7-cyano-7-deazaguanine biosynthesis. Catalyzes the ATP-dependent conversion of 7-carboxy-7-deazaguanine (CDG) to 7-cyano-7-deazaguanine (preQ(0)). This Prochlorococcus marinus (strain MIT 9301) protein is 7-cyano-7-deazaguanine synthase.